A 156-amino-acid polypeptide reads, in one-letter code: Cyanate hydratase (156 aa).

Residues Arg-96, Glu-99, and Ser-122 contribute to the active site.

The protein belongs to the cyanase family.

It catalyses the reaction cyanate + hydrogencarbonate + 3 H(+) = NH4(+) + 2 CO2. Functionally, catalyzes the reaction of cyanate with bicarbonate to produce ammonia and carbon dioxide. This Serratia proteamaculans (strain 568) protein is Cyanate hydratase.